Consider the following 322-residue polypeptide: Serine/threonine-protein phosphatase PP1-2 (322 aa).

Residues Asp60, His62, Asp88, and Asn120 each coordinate Mn(2+). Residue His121 is the Proton donor of the active site. His169 and His244 together coordinate Mn(2+). Residues 298–322 (RQRVSQSSIKESKSATNSLKKSKNN) form a disordered region. A compositionally biased stretch (polar residues) spans 301-316 (VSQSSIKESKSATNSL).

It belongs to the PPP phosphatase family. PP-1 subfamily. Mn(2+) is required as a cofactor.

The catalysed reaction is O-phospho-L-seryl-[protein] + H2O = L-seryl-[protein] + phosphate. It carries out the reaction O-phospho-L-threonyl-[protein] + H2O = L-threonyl-[protein] + phosphate. Its function is as follows. Essential role in cell cycle control. PP1 is perhaps required for exit from mitosis. The chain is Serine/threonine-protein phosphatase PP1-2 (sds21) from Schizosaccharomyces pombe (strain 972 / ATCC 24843) (Fission yeast).